Consider the following 527-residue polypeptide: UDP-glucuronosyltransferase 2A3 (527 aa).

Residues 1-23 (MRSEKSALVFLLLQLFCVGCGFC) form the signal peptide. Over 24 to 486 (GKVLVWPCDM…AAHNLTWFQH (463 aa)) the chain is Extracellular. Asparagine 313 carries an N-linked (GlcNAc...) asparagine glycan. Residues 487 to 507 (YSIDVIGFLLACVATAIFLFT) traverse the membrane as a helical segment. The Cytoplasmic portion of the chain corresponds to 508-523 (KCCLFSCQKFNKTRKI).

This sequence belongs to the UDP-glycosyltransferase family.

It is found in the membrane. It carries out the reaction glucuronate acceptor + UDP-alpha-D-glucuronate = acceptor beta-D-glucuronoside + UDP + H(+). UDP-glucuronosyltransferases catalyze phase II biotransformation reactions in which lipophilic substrates are conjugated with glucuronic acid to increase water solubility and enhance excretion. They are of major importance in the conjugation and subsequent elimination of potentially toxic xenobiotics and endogenous compounds. In Pongo abelii (Sumatran orangutan), this protein is UDP-glucuronosyltransferase 2A3 (UGT2A3).